We begin with the raw amino-acid sequence, 409 residues long: S-adenosylmethionine synthase (409 aa).

H15 serves as a coordination point for ATP. Mg(2+) is bound at residue D17. K(+) is bound at residue E43. Positions 56 and 100 each coordinate L-methionine. Residues 100–110 (QSSDIAQGVNE) are flexible loop. ATP-binding positions include 171-173 (DGK), 248-249 (KF), D257, 263-264 (RK), A280, and K284. Position 257 (D257) interacts with L-methionine. K288 lines the L-methionine pocket.

This sequence belongs to the AdoMet synthase family. In terms of assembly, homotetramer; dimer of dimers. The cofactor is Mg(2+). K(+) is required as a cofactor.

The protein resides in the cytoplasm. It catalyses the reaction L-methionine + ATP + H2O = S-adenosyl-L-methionine + phosphate + diphosphate. It participates in amino-acid biosynthesis; S-adenosyl-L-methionine biosynthesis; S-adenosyl-L-methionine from L-methionine: step 1/1. In terms of biological role, catalyzes the formation of S-adenosylmethionine (AdoMet) from methionine and ATP. The overall synthetic reaction is composed of two sequential steps, AdoMet formation and the subsequent tripolyphosphate hydrolysis which occurs prior to release of AdoMet from the enzyme. The chain is S-adenosylmethionine synthase from Prochlorococcus marinus (strain NATL2A).